Here is a 352-residue protein sequence, read N- to C-terminus: 4-hydroxy-2-oxovalerate aldolase (352 aa).

Residues 13–265 (VRLTDTSLRD…KTGIDFFDIA (253 aa)) form the Pyruvate carboxyltransferase domain. Position 21–22 (21–22 (RD)) interacts with substrate. Residue aspartate 22 participates in Mn(2+) binding. Histidine 25 serves as the catalytic Proton acceptor. Positions 175 and 204 each coordinate substrate. Residues histidine 204 and histidine 206 each coordinate Mn(2+). A substrate-binding site is contributed by tyrosine 295.

The protein belongs to the 4-hydroxy-2-oxovalerate aldolase family.

It carries out the reaction (S)-4-hydroxy-2-oxopentanoate = acetaldehyde + pyruvate. In Mycobacterium avium (strain 104), this protein is 4-hydroxy-2-oxovalerate aldolase.